We begin with the raw amino-acid sequence, 141 residues long: MNAKTVLGFDFGTKSIGVAVGQQITASATPLLSIKAVDGIPNWEEIAKLIQEWQPDLVVVGLPLNMDGTEQEMTHRARKFANRLNAKFGVKIFTQDERLTTTDAKARLFELGGYKALTKGQVDAVSAVLIIESYFENHFGD.

The protein belongs to the YqgF nuclease family.

It is found in the cytoplasm. Its function is as follows. Could be a nuclease involved in processing of the 5'-end of pre-16S rRNA. This is Putative pre-16S rRNA nuclease from Shewanella oneidensis (strain ATCC 700550 / JCM 31522 / CIP 106686 / LMG 19005 / NCIMB 14063 / MR-1).